The following is a 190-amino-acid chain: MSSFRSMLGVPPSTASTQDSVLVIIDAQGEYAEGKLKISNIEASRPNISSLLEKYRAANAPIVHVVHETPAGAPLFTQGTKLAEIFDELTPKEGEAVVTKHHPGSFADTNLQEILEKSGKKKIVLVGYMAHVCVSTTARQGAQRGWDVIVAEDAVGDRDIPGVDAAQLVKVALAEIADVFGTLVSSKDIN.

Catalysis depends on residues Asp26, Lys100, and Cys133.

It belongs to the isochorismatase family.

The protein localises to the secreted. It localises to the host cytoplasm. The protein resides in the host nucleus. The enzyme catalyses isochorismate + H2O = (2S,3S)-2,3-dihydroxy-2,3-dihydrobenzoate + pyruvate. Its function is as follows. Secreted isochorismatase required for full virulence of V.dahliae. Suppresses salicylate-mediated innate immunity of the host by disrupting the plant salicylate metabolism pathway via hydrolysis of its isochorismate precursor. This Verticillium dahliae (strain VdLs.17 / ATCC MYA-4575 / FGSC 10137) (Verticillium wilt) protein is Secreted isochorismatase effector Isc1.